A 116-amino-acid chain; its full sequence is Cysteine proteinase inhibitor 1 (116 aa).

An N-terminal signal peptide occupies residues 1–26 (MVPKPLSLLLFLLLALSAAVVGGRKL). The region spanning 30–89 (GGWRPIESLNSAEVQDVAQFAVSEHNKQANDELQYQSVVRGYTQVVAGTNYRLVIAAKDG) is the Cystatin domain. A Secondary area of contact motif is present at residues 73–77 (QVVAG). Asn109 is a glycosylation site (N-linked (GlcNAc...) asparagine).

It belongs to the cystatin family. Phytocystatin subfamily. Glycosylated.

Its subcellular location is the secreted. Specific inhibitor of papain family cysteine proteinases. Inhibits papain, chymopapain, bromelain, ficin, human cathepsins B, H and L, actinidain and house dustmite endopeptidase 1, but does not inhibit human bleomycin hydrolase. Inhibits papain with an IC(50) of 2.47 nM. Does not inhibit cysteine proteinases belonging to other families including clostripain, streptopain and calpain. This chain is Cysteine proteinase inhibitor 1, found in Actinidia deliciosa (Kiwi).